A 404-amino-acid polypeptide reads, in one-letter code: MSVGMAAPRAAFSCDPDRSRGRQFAEPPSSNRSAFRRDCDRVIHSNAFRRLKHKTQVFVFHEGDHYRTRLTHSLEVAQIARAIARQLGLDEDLTETLALAHDLGHPPFGHAGERALDACLRDHGGFDHNAQTLRVLTALEHRYPGFDGLNLTWETLEGVVKHNGPLTDRTGAPLPRHAERGVPIGIAEFSQRFDLEIWSFASLEAQVAALADDIAYDAHDIDDGLRAGLFRVDDLRAVPLTAALIDGISRRYPALGESRRGAELVRELISHLIGAVTAETMRRLGEAAPRSVEDVRHASTAMVAFPSETAVAEAEIKAFLWTHMYRAERVMAVMRDAEAIVADLFRRYCEHPADLPPDWLPADGPVAECEADRFRRIRNFIAGMTDRYALTEHQRLFDSTPDLR.

Residues 1–33 (MSVGMAAPRAAFSCDPDRSRGRQFAEPPSSNRS) form a disordered region. Residues 69–217 (RLTHSLEVAQ…AALADDIAYD (149 aa)) enclose the HD domain.

It belongs to the dGTPase family. Type 2 subfamily.

This chain is Deoxyguanosinetriphosphate triphosphohydrolase-like protein, found in Rhodopseudomonas palustris (strain HaA2).